We begin with the raw amino-acid sequence, 476 residues long: tRNA-2-methylthio-N(6)-dimethylallyladenosine synthase (476 aa).

One can recognise an MTTase N-terminal domain in the interval 5-122; it reads KKLYIKTWGC…LPEMINQVKG (118 aa). Residues cysteine 14, cysteine 51, cysteine 85, cysteine 159, cysteine 163, and cysteine 166 each coordinate [4Fe-4S] cluster. Residues 145–377 enclose the Radical SAM core domain; it reads RAEGPSAFVS…QQRINQQAMS (233 aa). The TRAM domain maps to 380-443; it reads RAMLGSVQRI…ANSLRGKVIR (64 aa).

This sequence belongs to the methylthiotransferase family. MiaB subfamily. Monomer. It depends on [4Fe-4S] cluster as a cofactor.

It is found in the cytoplasm. It catalyses the reaction N(6)-dimethylallyladenosine(37) in tRNA + (sulfur carrier)-SH + AH2 + 2 S-adenosyl-L-methionine = 2-methylsulfanyl-N(6)-dimethylallyladenosine(37) in tRNA + (sulfur carrier)-H + 5'-deoxyadenosine + L-methionine + A + S-adenosyl-L-homocysteine + 2 H(+). Functionally, catalyzes the methylthiolation of N6-(dimethylallyl)adenosine (i(6)A), leading to the formation of 2-methylthio-N6-(dimethylallyl)adenosine (ms(2)i(6)A) at position 37 in tRNAs that read codons beginning with uridine. The chain is tRNA-2-methylthio-N(6)-dimethylallyladenosine synthase from Photorhabdus laumondii subsp. laumondii (strain DSM 15139 / CIP 105565 / TT01) (Photorhabdus luminescens subsp. laumondii).